Reading from the N-terminus, the 412-residue chain is Multidrug resistance protein MdtA (412 aa).

The signal sequence occupies residues 1–21; it reads MKGSNIRRWGAALAVVIIAGA. 2 disordered regions span residues 33–53 and 389–412; these read GSGA…RHGR and VVTA…GARS.

Belongs to the membrane fusion protein (MFP) (TC 8.A.1) family. In terms of assembly, part of a tripartite efflux system composed of MdtA, MdtB and MdtC.

It localises to the cell inner membrane. The protein is Multidrug resistance protein MdtA of Klebsiella pneumoniae subsp. pneumoniae (strain ATCC 700721 / MGH 78578).